We begin with the raw amino-acid sequence, 354 residues long: Phosphate acyltransferase (354 aa).

It belongs to the PlsX family. In terms of assembly, homodimer. Probably interacts with PlsY.

It localises to the cytoplasm. It catalyses the reaction a fatty acyl-[ACP] + phosphate = an acyl phosphate + holo-[ACP]. Its pathway is lipid metabolism; phospholipid metabolism. Catalyzes the reversible formation of acyl-phosphate (acyl-PO(4)) from acyl-[acyl-carrier-protein] (acyl-ACP). This enzyme utilizes acyl-ACP as fatty acyl donor, but not acyl-CoA. This chain is Phosphate acyltransferase, found in Bordetella petrii (strain ATCC BAA-461 / DSM 12804 / CCUG 43448).